A 346-amino-acid chain; its full sequence is Methylthioribose-1-phosphate isomerase (346 aa).

Substrate contacts are provided by residues 48 to 50 (RGA), Arg88, and Gln192. The active-site Proton donor is the Asp233. 243–244 (NK) is a binding site for substrate.

Belongs to the eIF-2B alpha/beta/delta subunits family. MtnA subfamily.

The catalysed reaction is 5-(methylsulfanyl)-alpha-D-ribose 1-phosphate = 5-(methylsulfanyl)-D-ribulose 1-phosphate. The protein operates within amino-acid biosynthesis; L-methionine biosynthesis via salvage pathway; L-methionine from S-methyl-5-thio-alpha-D-ribose 1-phosphate: step 1/6. Its function is as follows. Catalyzes the interconversion of methylthioribose-1-phosphate (MTR-1-P) into methylthioribulose-1-phosphate (MTRu-1-P). This Alcanivorax borkumensis (strain ATCC 700651 / DSM 11573 / NCIMB 13689 / SK2) protein is Methylthioribose-1-phosphate isomerase.